The following is a 132-amino-acid chain: Putative RNase AF_2433 (132 aa).

Active-site residues include arginine 90 and histidine 95. The RX(4)HXY motif signature appears at 90–97 (RNWLVHRY). Tyrosine 97 is subject to O-di-AMP-tyrosine.

This sequence belongs to the HepT RNase toxin family. As to quaternary structure, homodimer, probably forms a complex with cognate antitoxin AF_2432. Post-translationally, modified by cognate antitoxin AF_2432; probably at least 2 successive AMPylation events occur on Tyr-97.

In terms of biological role, probable toxic component of a putative type VII toxin-antitoxin (TA) system, probably an RNase. Probably neutralized by cognate antitoxin AF_2432. Neutralization may be due to AMPylation by AF_2432. This Archaeoglobus fulgidus (strain ATCC 49558 / DSM 4304 / JCM 9628 / NBRC 100126 / VC-16) protein is Putative RNase AF_2433.